The chain runs to 126 residues: MQTTTQVKTPIVGKHVYGELYGVDEALLRDEEKLRRIVIEAAHIAKMHLVEVNSWRFKGGDKEGVSVIALVLESHIAIHTWPVYNYATVDVYTCGEHSDPMAAFRYIVSQLAPKRFTVNYSDRSYK.

Ser-74 serves as the catalytic Schiff-base intermediate with substrate; via pyruvic acid. At Ser-74 the chain carries Pyruvic acid (Ser); by autocatalysis. The active-site Proton acceptor; for processing activity is His-79. The active-site Proton donor; for catalytic activity is the Cys-94.

The protein belongs to the prokaryotic AdoMetDC family. Type 1 subfamily. As to quaternary structure, heterooctamer of four alpha and four beta chains arranged as a tetramer of alpha/beta heterodimers. It depends on pyruvate as a cofactor. Post-translationally, is synthesized initially as an inactive proenzyme. Formation of the active enzyme involves a self-maturation process in which the active site pyruvoyl group is generated from an internal serine residue via an autocatalytic post-translational modification. Two non-identical subunits are generated from the proenzyme in this reaction, and the pyruvate is formed at the N-terminus of the alpha chain, which is derived from the carboxyl end of the proenzyme. The post-translation cleavage follows an unusual pathway, termed non-hydrolytic serinolysis, in which the side chain hydroxyl group of the serine supplies its oxygen atom to form the C-terminus of the beta chain, while the remainder of the serine residue undergoes an oxidative deamination to produce ammonia and the pyruvoyl group blocking the N-terminus of the alpha chain.

It catalyses the reaction L-arginine + H(+) = agmatine + CO2. It functions in the pathway amine and polyamine biosynthesis; agmatine biosynthesis; agmatine from L-arginine: step 1/1. Specifically catalyzes the decarboxylation of L-arginine to agmatine. Has no S-adenosylmethionine decarboxylase (AdoMetDC) activity. This chain is Arginine decarboxylase proenzyme, found in Pyrobaculum islandicum (strain DSM 4184 / JCM 9189 / GEO3).